The primary structure comprises 1372 residues: uncharacterized protein (1372 aa).

Positions 1 to 67 (MEATDQEVML…PPAPSKNPMQ (67 aa)) are disordered. A compositionally biased stretch (polar residues) spans 17-28 (MSTSATSSTNGG). Residues 75–143 (NLYQTAQEQL…LEEHDRLRRK (69 aa)) adopt a coiled-coil conformation. Disordered regions lie at residues 178 to 199 (NDLSDLGIGTSSASGKSSLSGD), 238 to 287 (HINR…QASS), 380 to 414 (EVSNGGAPAAPKLVFRDGLTNGNSATTAPKSEVRR), 427 to 447 (QSLEQQRKAFSSSKSVDVPVP), and 486 to 531 (EERM…DSGI). 2 stretches are compositionally biased toward low complexity: residues 184–198 (GIGTSSASGKSSLSG) and 238–251 (HINRNGSNGNHGNG). 2 stretches are compositionally biased toward polar residues: residues 257-287 (TGPSNSSKSAGRQYISSPGYDTSSSNAQASS) and 399-408 (TNGNSATTAP). Positions 409–438 (KSEVRRLSGDISSIRDRMQSLEQQRKAFSS) form a coiled coil. The segment covering 486–499 (EERMRQQQQKEKHS) has biased composition (basic and acidic residues). Over residues 514–523 (ALIIEEPPVA) the composition is skewed to low complexity. Positions 539–580 (LQQQQQLNAAIAALALEERQLEEAANAVNQIEAEFDELTDLH) form a coiled coil. A compositionally biased stretch (low complexity) spans 652 to 673 (VSKSGPTPNPTSTPNMVSSSPN). 5 disordered regions span residues 652–679 (VSKSGPTPNPTSTPNMVSSSPNCNLRRK), 799–820 (SRQLDKPPTPPAPPKKTVRSEH), 860–897 (SQSDSKSLTSPIMSPKPLPSGRIPQITPPASPKPPKRV), 1151–1181 (SSQMMKTSLPESVEKPSTPLPGRKSKIPIPK), and 1231–1250 (SPPSIPKTPEQTQLHASPTK). 2 stretches are compositionally biased toward polar residues: residues 860-871 (SQSDSKSLTSPI) and 1151-1160 (SSQMMKTSLP).

This is an uncharacterized protein from Drosophila melanogaster (Fruit fly).